We begin with the raw amino-acid sequence, 361 residues long: PTI1-like tyrosine-protein kinase 1 (361 aa).

A disordered region spans residues 16-43 (EEQQLKSSQQQSDANHKNSKPAPVAKHE). One can recognise a Protein kinase domain in the interval 68–350 (FGSKALIGEG…IVVKALQPLL (283 aa)). Residues 74–82 (IGEGSYGRV) and lysine 96 contribute to the ATP site. Aspartate 200 (proton acceptor) is an active-site residue.

It belongs to the protein kinase superfamily. Tyr protein kinase family. In terms of assembly, interacts with OXI1. In terms of processing, autophosphorylated and phosphorylated by OXI1.

Its subcellular location is the cell membrane. The catalysed reaction is L-tyrosyl-[protein] + ATP = O-phospho-L-tyrosyl-[protein] + ADP + H(+). The chain is PTI1-like tyrosine-protein kinase 1 (PTI11) from Arabidopsis thaliana (Mouse-ear cress).